A 469-amino-acid chain; its full sequence is Neuraminidase (469 aa).

Residues 1–9 (MNPNQKIIT) lie on the Intravirion side of the membrane. A helical membrane pass occupies residues 10–30 (IGSVSLTIATICFLMQIAILV). An involved in apical transport and lipid raft association region spans residues 11–33 (GSVSLTIATICFLMQIAILVTTV). The Virion surface segment spans residues 31 to 469 (TTVTLHFKQY…DGADINLMPI (439 aa)). Positions 36–88 (HFKQYECSSPPNNQVMPCEPIIIERNITEIVYLTNTTIDKEICPKLVEYRNWS) are hypervariable stalk region. Residues Asn-61, Asn-70, and Asn-86 are each glycosylated (N-linked (GlcNAc...) asparagine; by host). A head of neuraminidase region spans residues 91–469 (QCKITGFAPF…DGADINLMPI (379 aa)). 8 cysteine pairs are disulfide-bonded: Cys-92–Cys-417, Cys-124–Cys-129, Cys-183–Cys-230, Cys-232–Cys-237, Cys-278–Cys-291, Cys-280–Cys-289, Cys-318–Cys-337, and Cys-421–Cys-447. A substrate-binding site is contributed by Arg-118. N-linked (GlcNAc...) asparagine; by host glycosylation is present at Asn-146. Asp-151 functions as the Proton donor/acceptor in the catalytic mechanism. Arg-152 provides a ligand contact to substrate. 2 N-linked (GlcNAc...) asparagine; by host glycosylation sites follow: Asn-200 and Asn-234. Substrate is bound at residue 276–277 (EE). Arg-292 is a substrate binding site. Asp-293, Gly-297, and Asp-324 together coordinate Ca(2+). A substrate-binding site is contributed by Arg-371. N-linked (GlcNAc...) asparagine; by host glycosylation occurs at Asn-402. Tyr-406 (nucleophile) is an active-site residue.

This sequence belongs to the glycosyl hydrolase 34 family. As to quaternary structure, homotetramer. The cofactor is Ca(2+). Post-translationally, N-glycosylated.

Its subcellular location is the virion membrane. The protein localises to the host apical cell membrane. The enzyme catalyses Hydrolysis of alpha-(2-&gt;3)-, alpha-(2-&gt;6)-, alpha-(2-&gt;8)- glycosidic linkages of terminal sialic acid residues in oligosaccharides, glycoproteins, glycolipids, colominic acid and synthetic substrates.. Inhibited by the neuraminidase inhibitors zanamivir (Relenza) and oseltamivir (Tamiflu). These drugs interfere with the release of progeny virus from infected cells and are effective against all influenza strains. Resistance to neuraminidase inhibitors is quite rare. Functionally, catalyzes the removal of terminal sialic acid residues from viral and cellular glycoconjugates. Cleaves off the terminal sialic acids on the glycosylated HA during virus budding to facilitate virus release. Additionally helps virus spread through the circulation by further removing sialic acids from the cell surface. These cleavages prevent self-aggregation and ensure the efficient spread of the progeny virus from cell to cell. Otherwise, infection would be limited to one round of replication. Described as a receptor-destroying enzyme because it cleaves a terminal sialic acid from the cellular receptors. May facilitate viral invasion of the upper airways by cleaving the sialic acid moieties on the mucin of the airway epithelial cells. Likely to plays a role in the budding process through its association with lipid rafts during intracellular transport. May additionally display a raft-association independent effect on budding. Plays a role in the determination of host range restriction on replication and virulence. Sialidase activity in late endosome/lysosome traffic seems to enhance virus replication. The polypeptide is Neuraminidase (Aves (whales)).